A 38-amino-acid chain; its full sequence is Cytochrome b6-f complex subunit 5 (38 aa).

A helical transmembrane segment spans residues 5–25 (LLLGIVLGLIPITLAGLFVAA).

The protein belongs to the PetG family. The 4 large subunits of the cytochrome b6-f complex are cytochrome b6, subunit IV (17 kDa polypeptide, PetD), cytochrome f and the Rieske protein, while the 4 small subunits are PetG, PetL, PetM and PetN. The complex functions as a dimer.

Its subcellular location is the cellular thylakoid membrane. Its function is as follows. Component of the cytochrome b6-f complex, which mediates electron transfer between photosystem II (PSII) and photosystem I (PSI), cyclic electron flow around PSI, and state transitions. PetG is required for either the stability or assembly of the cytochrome b6-f complex. The chain is Cytochrome b6-f complex subunit 5 from Rippkaea orientalis (strain PCC 8801 / RF-1) (Cyanothece sp. (strain PCC 8801)).